Here is a 1522-residue protein sequence, read N- to C-terminus: Dicer-like protein 1 (1522 aa).

Acidic residues predominate over residues 1–12; it reads MTWAGDVEEQDD. Residues 1–37 form a disordered region; that stretch reads MTWAGDVEEQDDYFSCSDVSTSGDRRKRAPQTVTQEE. The Helicase ATP-binding domain maps to 76 to 258; sequence LFLRAKMQNT…EHVREAAREL (183 aa). Residue 89–96 coordinates ATP; sequence LDTGTGKT. The short motif at 202–205 is the DEAH box element; it reads DEAH. The 169-residue stretch at 408–576 folds into the Helicase C-terminal domain; it reads WLNLYYERTT…DVEQEKAELI (169 aa). A Dicer dsRNA-binding fold domain is found at 600–700; the sequence is SLSILSHFVA…LPTISKYLPA (101 aa). The region spanning 859–980 is the PAZ domain; it reads PFWKWSPQSR…ICPEPLHISN (122 aa). 2 consecutive RNase III domains span residues 995–1166 and 1222–1373; these read IIHR…MQHH and AHKI…VDSE. Residues Glu1262, Asp1359, and Glu1362 each contribute to the Mg(2+) site. The 70-residue stretch at 1409–1478 folds into the DRBM domain; it reads TRLSRLLSIN…SHAALEKLEG (70 aa). Zn(2+) contacts are provided by Cys1421, His1449, Cys1490, and Cys1492.

Belongs to the helicase family. Dicer subfamily. Mg(2+) serves as cofactor. The cofactor is Mn(2+).

In terms of biological role, dicer-like endonuclease involved in cleaving double-stranded RNA in the RNA interference (RNAi) pathway. Produces 21 to 25 bp dsRNAs (siRNAs) which target the selective destruction of homologous RNAs leading to sequence-specific suppression of gene expression, called post-transcriptional gene silencing (PTGS). Part of a broad host defense response against viral infection and transposons. The chain is Dicer-like protein 1 (DCL1) from Phaeosphaeria nodorum (strain SN15 / ATCC MYA-4574 / FGSC 10173) (Glume blotch fungus).